Reading from the N-terminus, the 724-residue chain is MASAVERTDDLVREYLIYRGFTSTLKHLDSEIKTDKEKGFRVDKIMDQLQLLIQSCDLTGLKEYWANLERRLFCRLEDVYKPTVSKLRTSLYRFYLIHTVQVKNVEKTQEFFQKQALELQAQAEWRDWFSLPFIPAPEQNPSFSAYFSRQWADTFLVSLHNFLSVLFQCMPLPALLSFDSEVQRITSLQEDNEQLRQTVFALQGESRLKKDEQMVHHKLPPYVQHMDRLGDTELDLVSSQRNVNMATPSRNFFSTFLPQGRRAPGRTAPGPQSSPTQSALGRKDAAASMQSSKAKDKEVKPPSVSSMTAELSTSHPRQRRHQDHEKERKELFSKHAAQGSEKKTDSDPDTQTEAPPDQTDSANQTRVCDVGGAGAEQPFIKLSQEEYGEHHSSIMHCRVDCSGRRVASLDVDGVVKVWAFNPIMQTKATIMSKSPLLSLEWAAKPDRLLLLGSGVGTVKLYDTDAKKCLYEMTIDDVHPRILSLACSPSGTSFVCSAAAHSGAVMESEPRGSAPVSGQLLLWDTKTVKQQLQFALEPGPVAINCTAFNHNGNLLVTGAADGIIRLFDMQRYESALSWKAHDGEVYSVEFSYDENTVFSIGEDGKFVQWNIHRCGVKQSEYSLSQDAVGPFVLSGYSGYKQVQVPRGRLFAFDSEGQHVLTCSSTGGNIYRLNKAEAGLESVLSLAGHKAPVVTVDWCSAMDCGTCLTASMDGKIKLSTLLAQKP.

The stretch at 178–207 forms a coiled coil; it reads FDSEVQRITSLQEDNEQLRQTVFALQGESR. Positions 249–365 are disordered; that stretch reads SRNFFSTFLP…PDQTDSANQT (117 aa). 2 stretches are compositionally biased toward polar residues: residues 270-279 and 303-315; these read GPQSSPTQSA and SVSSMTAELSTSH. Ser-274 carries the post-translational modification Phosphoserine. Residues 322-333 show a composition bias toward basic and acidic residues; that stretch reads QDHEKERKELFS. Residues 349–365 show a composition bias toward polar residues; the sequence is DTQTEAPPDQTDSANQT. WD repeat units lie at residues 389 to 428, 431 to 471, 499 to 532, 537 to 576, 579 to 618, 641 to 679, and 686 to 724; these read EHHSSIMHCRVDCSGRRVASLDVDGVVKVWAFNPIMQTKA, MSKS…CLYE, AHSGAVMESEPRGSAPVSGQLLLWDTKTVKQQLQ, PGPVAINCTAFNHNGNLLVTGAADGIIRLFDMQRYESALS, AHDGEVYSVEFSYDENTVFSIGEDGKFVQWNIHRCGVKQS, VQVPRGRLFAFDSEGQHVLTCSSTGGNIYRLNKAEAGLE, and GHKAPVVTVDWCSAMDCGTCLTASMDGKIKLSTLLAQKP.

The protein belongs to the WD repeat WDR91 family.

Its subcellular location is the early endosome membrane. It is found in the late endosome membrane. Functionally, functions as a negative regulator of the PI3 kinase/PI3K activity associated with endosomal membranes. By modifying the phosphatidylinositol 3-phosphate/PtdInsP3 content of endosomal membranes may regulate endosome fusion, recycling, sorting and early to late endosome transport. The sequence is that of WD repeat-containing protein 91 (wdr91) from Danio rerio (Zebrafish).